The sequence spans 118 residues: Ribosome-binding factor A (118 aa).

Belongs to the RbfA family. Monomer. Binds 30S ribosomal subunits, but not 50S ribosomal subunits or 70S ribosomes.

The protein resides in the cytoplasm. Its function is as follows. One of several proteins that assist in the late maturation steps of the functional core of the 30S ribosomal subunit. Associates with free 30S ribosomal subunits (but not with 30S subunits that are part of 70S ribosomes or polysomes). Required for efficient processing of 16S rRNA. May interact with the 5'-terminal helix region of 16S rRNA. The chain is Ribosome-binding factor A from Geobacter sulfurreducens (strain ATCC 51573 / DSM 12127 / PCA).